The primary structure comprises 407 residues: Protein ORF45 (407 aa).

Residues 1–10 (MAMFVRTSSS) are compositionally biased toward polar residues. Disordered regions lie at residues 1-183 (MAMF…SDDE), 196-318 (GTGA…QRQP), and 332-407 (SSGS…PWLD). S41 bears the Phosphoserine; by host TBK1 and IKKE mark. A compositionally biased stretch (acidic residues) spans 91–115 (SEYDEDEEDEDEEENDDVQEEDEPE). Residues 128-139 (LRPRPLARRAHT) show a composition bias toward basic residues. S162 bears the Phosphoserine; by host TBK1 and IKKE mark. Residues 205-218 (ASRNSVPGTQSSPY) are compositionally biased toward polar residues. Positions 284-294 (VLSQRIGLMDV) match the Nuclear export signal motif. Residues 297 to 300 (KRKR) carry the Nuclear localization signal motif. 2 stretches are compositionally biased toward low complexity: residues 342 to 353 (SSAVSVIVSPSS) and 360 to 383 (TQSP…SRCS).

As to quaternary structure, interacts with host IRF7. Interacts with host RPS6KA1. Interacts with host RAB11FIP5; this interaction results in the lysosomal degradation of ORF45 and the inhibition of viral particle release. Interacts with host p53/TP53; this interaction down-regulates p53/TP53 signaling pathway. Interacts with the N-terminal part of host NLRP1; relieving autoinhibition of the NLRP1 inflammasome. Phosphorylated on Ser-41 and Ser-162 by host IKBKE and TBK1.

Its subcellular location is the virion tegument. The protein resides in the host cytoplasm. It is found in the host nucleus. The protein localises to the host Golgi apparatus. In terms of biological role, prevents the establishment of cellular antiviral state by blocking virus-induced phosphorylation and activation of host interferon regulatory factor 7/IRF7, a transcription factor critical for the induction of interferons alpha and beta. Mechanistically, ORF45 competes with the associated IRF7 and inhibits its phosphorylation by IKBKE or TBK1 by acting as an alternative substrate. Acts as an activator of the NLRP1 inflammasome via interaction with the N-terminal part of host NLRP1: interaction promotes translocation of the N-terminal part of NLRP1 into the nucleus, relieving autoinhibition of the NLRP1 inflammasome and leading to its activation. Also plays a role in promoting the late transcription and translation of viral lytic genes by constitutively activating host extracellular signal-regulated kinase (ERK)-p90 ribosomal S6 kinase/RPS6KA1. In addition, supports the viral replication cycle by modulating host p53/TP53 signaling pathway. Interacts with host p53/TP53 and prevents its interaction with the deubiquitinase USP7, leading to sequestration of P53/TP53 in the host cytoplasm thereby diminishing its transcriptional activity. This is Protein ORF45 (ORF45) from Homo sapiens (Human).